The sequence spans 287 residues: VNGAAYAGLCAYMFLLILVGFPVNFLTLYVTLEHKKLRTPLNYILLNLAVADLFMVLGGFTTTMYTSAHGYFVLGRLGCNVEGFFATLGGEIALWSLVVLAVERWIVVCKPISNFRFTEEHAIMGLGFNWVMASACAVPPLVGWSRYIPEGMQCSCGINYYTRSEGFNNESLVMKMLICHFLIPLFVIFFCYGRMLCAVKEAAAAQQESETTQRAEREVSRMVVIMVISFLVCWLPYASVAWYIFCNQGSEFGPVFMTLPAFFAKSASIYNPLIYICMNKHSRHCMI.

At 1–5 the chain is on the extracellular side; it reads VNGAA. The helical transmembrane segment at 6 to 30 threads the bilayer; it reads YAGLCAYMFLLILVGFPVNFLTLYV. Residues 31 to 42 are Cytoplasmic-facing; it reads TLEHKKLRTPLN. The chain crosses the membrane as a helical span at residues 43-65; the sequence is YILLNLAVADLFMVLGGFTTTMY. Residues 66–79 are Extracellular-facing; the sequence is TSAHGYFVLGRLGC. Cysteines 79 and 156 form a disulfide. A helical transmembrane segment spans residues 80–102; the sequence is NVEGFFATLGGEIALWSLVVLAV. The 'Ionic lock' involved in activated form stabilization signature appears at 103–105; it reads ERW. At 103–121 the chain is on the cytoplasmic side; that stretch reads ERWIVVCKPISNFRFTEEH. A helical transmembrane segment spans residues 122 to 142; it reads AIMGLGFNWVMASACAVPPLV. Residues 143-171 are Extracellular-facing; the sequence is GWSRYIPEGMQCSCGINYYTRSEGFNNES. Asparagine 169 is a glycosylation site (N-linked (GlcNAc...) asparagine). A helical transmembrane segment spans residues 172–193; that stretch reads LVMKMLICHFLIPLFVIFFCYG. Over 194–221 the chain is Cytoplasmic; that stretch reads RMLCAVKEAAAAQQESETTQRAEREVSR. Residues 222-243 form a helical membrane-spanning segment; the sequence is MVVIMVISFLVCWLPYASVAWY. Topologically, residues 244–255 are extracellular; sequence IFCNQGSEFGPV. A helical transmembrane segment spans residues 256–277; it reads FMTLPAFFAKSASIYNPLIYIC. Lysine 265 carries the N6-(retinylidene)lysine modification. At 278 to 287 the chain is on the cytoplasmic side; that stretch reads MNKHSRHCMI.

It belongs to the G-protein coupled receptor 1 family. Opsin subfamily. Post-translationally, phosphorylated on some or all of the serine and threonine residues present in the C-terminal region. In terms of processing, contains one covalently linked retinal chromophore.

It localises to the membrane. The protein localises to the cell projection. It is found in the cilium. The protein resides in the photoreceptor outer segment. Its function is as follows. Photoreceptor required for image-forming vision at low light intensity. While most salt water fish species use retinal as chromophore, most freshwater fish use 3-dehydroretinal, or a mixture of retinal and 3-dehydroretinal. Light-induced isomerization of 11-cis to all-trans retinal triggers a conformational change that activates signaling via G-proteins. Subsequent receptor phosphorylation mediates displacement of the bound G-protein alpha subunit by arrestin and terminates signaling. The protein is Rhodopsin (rho) of Taurulus bubalis (Long-spined sea scorpion).